Consider the following 437-residue polypeptide: U1 small nuclear ribonucleoprotein 70 kDa (437 aa).

Threonine 2 carries the post-translational modification N-acetylthreonine. Residues 48–79 (FEDPRDAPPPTRAETREERMERKRREKIERRQ) are disordered. Residues 60–79 (AETREERMERKRREKIERRQ) are compositionally biased toward basic and acidic residues. Residues 92 to 202 (HNDPNAQGDA…GGGLGGTRRG (111 aa)) form a required for interaction with U1 RNA region. Residues 103–181 (KTLFVARVNY…RRVLVDVERG (79 aa)) form the RRM domain. An N6-acetyllysine modification is found at lysine 118. A Phosphotyrosine modification is found at tyrosine 126. The tract at residues 187–437 (WRPRRLGGGL…NGYLMEAAPE (251 aa)) is disordered. Residues 192–201 (LGGGLGGTRR) are compositionally biased toward gly residues. Over residues 207-254 (NIRHSGRDDTSRYDERPGPSPLPHRDRDRDRERERRERSRERDKERER) the composition is skewed to basic and acidic residues. Serine 226 and serine 268 each carry phosphoserine. Residues 255–268 (RRSRSRDRRRRSRS) show a composition bias toward basic residues. Basic and acidic residues-rich tracts occupy residues 269–286 (RDKEERRRSRERSKDKDR) and 294–310 (RSRERARRERERKEELR). Serine 320 is modified (phosphoserine). Residues 343-393 (PEEKGRDRDRERRRSHRSERERRRDRDRDRDRDREHKRGERGSERGRDEAR) are compositionally biased toward basic and acidic residues. A Glycyl lysine isopeptide (Lys-Gly) (interchain with G-Cter in SUMO2) cross-link involves residue lysine 346. A Phosphoserine modification is found at serine 410.

Component of the U1 snRNP. The U1 snRNP is composed of the U1 snRNA and the 7 core Sm proteins SNRPB, SNRPD1, SNRPD2, SNRPD3, SNRPE, SNRPF and SNRPG that assemble in a heptameric protein ring on the Sm site of the small nuclear RNA to form the core snRNP, and at least three U1 snRNP-specific proteins SNRNP70/U1-70K, SNRPA/U1-A and SNRPC/U1-C. Interacts with SCNM1. Found in a pre-mRNA splicing complex with SFRS4, SFRS5, SNRNP70, SNRPA1, SRRM1 and SRRM2. Found in a pre-mRNA exonic splicing enhancer (ESE) complex with SNRNP70, SNRPA1, SRRM1 and TRA2B/SFRS10. Interacts with dephosphorylated SFRS13A and SFPQ. Interacts with NUDT21/CPSF5, CPSF6, SCAF11, and ZRANB2. Interacts with GEMIN5. Interacts with FUS. Post-translationally, the N-terminus is blocked. Extensively phosphorylated on serine residues in the C-terminal region.

It is found in the nucleus speckle. The protein localises to the nucleus. It localises to the nucleoplasm. Component of the spliceosomal U1 snRNP, which is essential for recognition of the pre-mRNA 5' splice-site and the subsequent assembly of the spliceosome. SNRNP70 binds to the loop I region of U1-snRNA. In terms of biological role, truncated isoforms that lack the RRM domain cannot bind U1-snRNA. The protein is U1 small nuclear ribonucleoprotein 70 kDa (SNRNP70) of Homo sapiens (Human).